Reading from the N-terminus, the 115-residue chain is NADH-ubiquinone oxidoreductase chain 3 (115 aa).

3 helical membrane passes run 4–24 (LVTM…AFWL), 55–75 (FFLV…LLPM), and 86–106 (TMTL…AYEW).

Belongs to the complex I subunit 3 family. In terms of assembly, core subunit of respiratory chain NADH dehydrogenase (Complex I) which is composed of 45 different subunits. Interacts with TMEM186. Interacts with TMEM242.

It is found in the mitochondrion inner membrane. The enzyme catalyses a ubiquinone + NADH + 5 H(+)(in) = a ubiquinol + NAD(+) + 4 H(+)(out). In terms of biological role, core subunit of the mitochondrial membrane respiratory chain NADH dehydrogenase (Complex I) which catalyzes electron transfer from NADH through the respiratory chain, using ubiquinone as an electron acceptor. Essential for the catalytic activity of complex I. This chain is NADH-ubiquinone oxidoreductase chain 3, found in Nelsonia neotomodon (Diminutive woodrat).